Consider the following 262-residue polypeptide: Large ribosomal subunit protein uL5c (262 aa).

The N-terminal 39 residues, 1 to 39 (MASPSLLQSSASSFHGRFSPLAAPSSARMLSPPLRNVVK), are a transit peptide targeting the chloroplast.

It belongs to the universal ribosomal protein uL5 family. As to quaternary structure, part of the 50S ribosomal subunit; contacts the 5S rRNA.

The protein resides in the plastid. Its subcellular location is the chloroplast. Functionally, binds 5S rRNA, forms part of the central protuberance of the 50S subunit. The sequence is that of Large ribosomal subunit protein uL5c (RPL5) from Arabidopsis thaliana (Mouse-ear cress).